The chain runs to 599 residues: Stromal 70 kDa heat shock-related protein, chloroplastic (599 aa).

A disordered region spans residues 545 to 573 (NQPGAGGEPGAAQAQHQEQSSARQIQRAK). Over residues 554 to 568 (GAAQAQHQEQSSARQ) the composition is skewed to low complexity.

It belongs to the heat shock protein 70 family.

Its subcellular location is the plastid. The protein localises to the chloroplast stroma. In terms of biological role, interacts with newly imported chloroplast proteins to assist in their maturation. The chain is Stromal 70 kDa heat shock-related protein, chloroplastic (CHSP70) from Spinacia oleracea (Spinach).